We begin with the raw amino-acid sequence, 495 residues long: UDP-glycosyltransferase 73C25 (495 aa).

UDP-alpha-D-glucose is bound at residue 23 to 26 (GHMI). H24 (proton acceptor) is an active-site residue. D129 (charge relay) is an active-site residue. UDP-alpha-D-glucose-binding positions include 355–358 (WSPQ), 373–381 (HCGWNSTLE), and 397–398 (DQ).

This sequence belongs to the UDP-glycosyltransferase family.

In terms of biological role, catalyzes the transfer of a glucose (Glc) moiety from UDP-Glc to the C-28 carboxylic group of oleanolate 3-O-beta-D-glucoside to form oleanolate 3,28-O-beta-D-diglucoside. The polypeptide is UDP-glycosyltransferase 73C25 (Barbarea vulgaris (Yellow rocket)).